The primary structure comprises 338 residues: Aspartate carbamoyltransferase catalytic subunit (338 aa).

The carbamoyl phosphate site is built by R72 and T73. K100 provides a ligand contact to L-aspartate. Carbamoyl phosphate is bound by residues R122, H152, and Q155. Positions 186 and 243 each coordinate L-aspartate. Residues G284 and P285 each contribute to the carbamoyl phosphate site.

The protein belongs to the aspartate/ornithine carbamoyltransferase superfamily. ATCase family. As to quaternary structure, heterododecamer (2C3:3R2) of six catalytic PyrB chains organized as two trimers (C3), and six regulatory PyrI chains organized as three dimers (R2).

The enzyme catalyses carbamoyl phosphate + L-aspartate = N-carbamoyl-L-aspartate + phosphate + H(+). It functions in the pathway pyrimidine metabolism; UMP biosynthesis via de novo pathway; (S)-dihydroorotate from bicarbonate: step 2/3. In terms of biological role, catalyzes the condensation of carbamoyl phosphate and aspartate to form carbamoyl aspartate and inorganic phosphate, the committed step in the de novo pyrimidine nucleotide biosynthesis pathway. The polypeptide is Aspartate carbamoyltransferase catalytic subunit (Acinetobacter baylyi (strain ATCC 33305 / BD413 / ADP1)).